A 436-amino-acid polypeptide reads, in one-letter code: GTPase Der (436 aa).

EngA-type G domains lie at 4-167 (PTVA…PTEV) and 175-351 (IRFS…ESQN). GTP contacts are provided by residues 10-17 (GRPNVGKS), 57-61 (DTGGI), 119-122 (NKVD), 181-188 (GRPNVGKS), 229-233 (DTAGM), and 294-297 (NKWD). Residues 352–436 (RRISSAVLND…PIHLIARKRK (85 aa)) form the KH-like domain.

Belongs to the TRAFAC class TrmE-Era-EngA-EngB-Septin-like GTPase superfamily. EngA (Der) GTPase family. Associates with the 50S ribosomal subunit.

In terms of biological role, GTPase that plays an essential role in the late steps of ribosome biogenesis. The chain is GTPase Der from Streptococcus thermophilus (strain CNRZ 1066).